Consider the following 189-residue polypeptide: MEGQEDYQLLYEGRRSQPAPEEQEASALPRGRRQRGVEAGEGSVGREEARGHRRSQHRDRLGGGSMGSNVIGLPGVNPPTSEVVVLEPRSFDEMAQVIQYLRERKTVIMNLTLMDPAEAQRSVDFVAGGTYAIDGHQERIGENIFLFTPSTVTVSTPSSQGMPPLQRPLQSPTPLWPSGYEHLQAVGQH.

Disordered regions lie at residues 1–75 (MEGQ…GLPG) and 155–174 (STPS…SPTP).

Belongs to the SepF family. In terms of assembly, homodimer. Interacts with FtsZ.

The protein localises to the cytoplasm. Cell division protein that is part of the divisome complex and is recruited early to the Z-ring. Probably stimulates Z-ring formation, perhaps through the cross-linking of FtsZ protofilaments. Its function overlaps with FtsA. This is Cell division protein SepF from Synechococcus sp. (strain JA-3-3Ab) (Cyanobacteria bacterium Yellowstone A-Prime).